Reading from the N-terminus, the 299-residue chain is Pyridoxal 5'-phosphate synthase subunit PdxS (299 aa).

D24 is a binding site for D-ribose 5-phosphate. Residue K81 is the Schiff-base intermediate with D-ribose 5-phosphate of the active site. Position 153 (G153) interacts with D-ribose 5-phosphate. R165 serves as a coordination point for D-glyceraldehyde 3-phosphate. Residues G219 and 240–241 contribute to the D-ribose 5-phosphate site; that span reads GS.

This sequence belongs to the PdxS/SNZ family. In terms of assembly, in the presence of PdxT, forms a dodecamer of heterodimers.

The catalysed reaction is aldehydo-D-ribose 5-phosphate + D-glyceraldehyde 3-phosphate + L-glutamine = pyridoxal 5'-phosphate + L-glutamate + phosphate + 3 H2O + H(+). It participates in cofactor biosynthesis; pyridoxal 5'-phosphate biosynthesis. Its function is as follows. Catalyzes the formation of pyridoxal 5'-phosphate from ribose 5-phosphate (RBP), glyceraldehyde 3-phosphate (G3P) and ammonia. The ammonia is provided by the PdxT subunit. Can also use ribulose 5-phosphate and dihydroxyacetone phosphate as substrates, resulting from enzyme-catalyzed isomerization of RBP and G3P, respectively. The polypeptide is Pyridoxal 5'-phosphate synthase subunit PdxS (Methanococcus maripaludis (strain C6 / ATCC BAA-1332)).